Consider the following 136-residue polypeptide: uncharacterized protein (136 aa).

The first 19 residues, 1–19 (MMTAAKRLGLYSALRACSA), serve as a signal peptide directing secretion. A helical transmembrane segment spans residues 75-97 (FWFSHTCLVFGSNTILFASLNSF).

Its subcellular location is the membrane. This is an uncharacterized protein from Saccharomyces cerevisiae (strain ATCC 204508 / S288c) (Baker's yeast).